Here is a 185-residue protein sequence, read N- to C-terminus: dTDP-4-dehydrorhamnose 3,5-epimerase (185 aa).

Substrate is bound by residues arginine 23, glutamate 28, 47–49 (QDN), and arginine 59. Residue histidine 62 is the Proton acceptor of the active site. Residues lysine 72 and histidine 119 each coordinate substrate. Residue tyrosine 132 is the Proton donor of the active site. Positions 143 and 168 each coordinate substrate.

Belongs to the dTDP-4-dehydrorhamnose 3,5-epimerase family. In terms of assembly, homodimer.

It carries out the reaction dTDP-4-dehydro-6-deoxy-alpha-D-glucose = dTDP-4-dehydro-beta-L-rhamnose. It participates in carbohydrate biosynthesis; dTDP-L-rhamnose biosynthesis. It functions in the pathway bacterial outer membrane biogenesis; LPS O-antigen biosynthesis. Its function is as follows. Catalyzes the epimerization of the C3' and C5'positions of dTDP-6-deoxy-D-xylo-4-hexulose, forming dTDP-6-deoxy-L-lyxo-4-hexulose. The chain is dTDP-4-dehydrorhamnose 3,5-epimerase (rfbC) from Escherichia coli (strain K12).